Reading from the N-terminus, the 546-residue chain is Probable protein kinase UbiB (546 aa).

A Protein kinase domain is found at 124–502; it reads DFDIQPLASA…HVRQSQSRYL (379 aa). ATP contacts are provided by residues 130–138 and lysine 153; that span reads LASASIAQV. The Proton acceptor role is filled by aspartate 288. 2 helical membrane passes run 501–521 and 522–542; these read YLLGIGATLLLSGSFLLVNRP and EWGLMPSWLMVGGVVVWLVGW.

The protein belongs to the ABC1 family. UbiB subfamily.

It is found in the cell inner membrane. Its pathway is cofactor biosynthesis; ubiquinone biosynthesis [regulation]. In terms of biological role, is probably a protein kinase regulator of UbiI activity which is involved in aerobic coenzyme Q (ubiquinone) biosynthesis. This chain is Probable protein kinase UbiB, found in Salmonella gallinarum (strain 287/91 / NCTC 13346).